The following is a 320-amino-acid chain: G-protein coupled receptor homolog FPV021 (320 aa).

Topologically, residues 1–18 are extracellular; that stretch reads MDTDYGTVHTQQSVKGNT. Residues 19 to 39 form a helical membrane-spanning segment; sequence LILLIYFISFIVGFPGNCTVI. Topologically, residues 40–52 are cytoplasmic; sequence WFTGYRWKKSVTT. The helical transmembrane segment at 53 to 73 threads the bilayer; sequence IWFLNLAIADTLFVIFIPFEI. At 74-91 the chain is on the extracellular side; it reads TYILMGHYWPFGLFVCRI. An intrachain disulfide couples cysteine 89 to cysteine 167. A helical transmembrane segment spans residues 92-112; that stretch reads GSLMFNTGMYASIFFLTFISI. At 113–133 the chain is on the cytoplasmic side; the sequence is DRYCLAFRRDICNKYRYRINI. A helical transmembrane segment spans residues 134 to 154; the sequence is MVMIIISWIISILLSTPYMYF. The Extracellular segment spans residues 155–188; that stretch reads KNTNEKYRNNRDCLEDYHSDNNTYLLRRVVFCIS. Residue asparagine 175 is glycosylated (N-linked (GlcNAc...) asparagine; by host). A helical transmembrane segment spans residues 189–209; sequence LVMRYLVPSVVMLFCYCLLLF. The Cytoplasmic segment spans residues 210-222; sequence KHSLFLSKGQTYT. The chain crosses the membrane as a helical span at residues 223-243; the sequence is IVIMITSFMVLWTPYNILYFI. Topologically, residues 244 to 260 are extracellular; sequence DVIGSHYYNADTIIDAA. The chain crosses the membrane as a helical span at residues 261 to 281; sequence PISISLIFLSSSINPMIYMLV. The Cytoplasmic portion of the chain corresponds to 282–320; the sequence is GRYVSFENYSMRESLKLILSEERDNQTNHENEIKMENIN.

Belongs to the G-protein coupled receptor 1 family.

It is found in the host cell membrane. In Vertebrata (FPV), this protein is G-protein coupled receptor homolog FPV021.